We begin with the raw amino-acid sequence, 477 residues long: Aryl-phospho-beta-D-glucosidase BglC (477 aa).

Glu-170 serves as the catalytic Proton donor. The active-site Nucleophile is the Glu-378.

This sequence belongs to the glycosyl hydrolase 1 family.

The enzyme catalyses 6-phospho-beta-D-glucosyl-(1-&gt;4)-D-glucose + H2O = D-glucose 6-phosphate + D-glucose. Its function is as follows. Is able to catalyze the hydrolysis of aryl-phospho-beta-D-glucosides such as 4-methylumbelliferyl-phospho-beta-D-glucopyranoside (MUG-P), phosphoarbutin and phosphosalicin. Is not essential for growth on arbutin and salicin as the sole carbon source. The polypeptide is Aryl-phospho-beta-D-glucosidase BglC (bglC) (Bacillus subtilis (strain 168)).